The chain runs to 302 residues: Acetaldehyde dehydrogenase (302 aa).

Cys-131 (acyl-thioester intermediate) is an active-site residue. Residues 162–170 (SAGPGTRKN) and Asn-273 each bind NAD(+).

It belongs to the acetaldehyde dehydrogenase family.

The enzyme catalyses acetaldehyde + NAD(+) + CoA = acetyl-CoA + NADH + H(+). This Acidovorax sp. (strain JS42) protein is Acetaldehyde dehydrogenase.